The chain runs to 306 residues: Phosphatidate cytidylyltransferase (306 aa).

The segment at 1–28 (MTTNDAGTGNPAEQPARGAKQQPATETS) is disordered. 8 helical membrane-spanning segments follow: residues 36-56 (AAIVVGLSIGLVLIAVLVFVP), 82-102 (GYLIPVIPLLIGGQAAVWLTW), 103-123 (PFGAVGALAGFGGMVVVCMIW), 151-171 (ATVFLAVWVPLFCSFGAMLVY), 180-200 (FCMMIAVIASDVGGYAVGVLF), 218-238 (FAGSLVCGITATIITATFLVG), 241-261 (PWIGALLGVLFVLTTALGDLV), and 285-305 (MDRLDGILPSAVAAWIVLTLL).

The protein belongs to the CDS family.

It localises to the cell membrane. The catalysed reaction is a 1,2-diacyl-sn-glycero-3-phosphate + CTP + H(+) = a CDP-1,2-diacyl-sn-glycerol + diphosphate. The protein operates within phospholipid metabolism; CDP-diacylglycerol biosynthesis; CDP-diacylglycerol from sn-glycerol 3-phosphate: step 3/3. The chain is Phosphatidate cytidylyltransferase (cdsA) from Mycobacterium bovis (strain ATCC BAA-935 / AF2122/97).